Here is a 146-residue protein sequence, read N- to C-terminus: Putative inactive cytochrome P450 2G1 (146 aa).

Residue cysteine 91 participates in heme binding.

It belongs to the cytochrome P450 family. The cofactor is heme.

The sequence is that of Putative inactive cytochrome P450 2G1 (CYP2G1P) from Homo sapiens (Human).